A 324-amino-acid polypeptide reads, in one-letter code: Probable pectinesterase A (324 aa).

A signal peptide spans 1–19; the sequence is MHGSLLKLALLSFSLASSA. Gln142 contacts substrate. Asp165 (proton donor) is an active-site residue. Residue Asp186 is the Nucleophile of the active site. Substrate contacts are provided by Arg246 and Trp248. Asn285 carries an N-linked (GlcNAc...) asparagine glycan.

This sequence belongs to the pectinesterase family.

It is found in the secreted. The catalysed reaction is [(1-&gt;4)-alpha-D-galacturonosyl methyl ester](n) + n H2O = [(1-&gt;4)-alpha-D-galacturonosyl](n) + n methanol + n H(+). It participates in glycan metabolism; pectin degradation; 2-dehydro-3-deoxy-D-gluconate from pectin: step 1/5. Functionally, involved in maceration and soft-rotting of plant tissue. The sequence is that of Probable pectinesterase A (pmeA) from Aspergillus flavus (strain ATCC 200026 / FGSC A1120 / IAM 13836 / NRRL 3357 / JCM 12722 / SRRC 167).